A 363-amino-acid polypeptide reads, in one-letter code: Phosphoserine aminotransferase (363 aa).

Position 42 (Arg-42) interacts with L-glutamate. Pyridoxal 5'-phosphate contacts are provided by residues 76–77, Trp-102, Thr-156, Asp-175, and Gln-198; that span reads GR. The residue at position 199 (Lys-199) is an N6-(pyridoxal phosphate)lysine. Position 240 to 241 (240 to 241) interacts with pyridoxal 5'-phosphate; it reads NT.

This sequence belongs to the class-V pyridoxal-phosphate-dependent aminotransferase family. SerC subfamily. In terms of assembly, homodimer. Pyridoxal 5'-phosphate is required as a cofactor.

Its subcellular location is the cytoplasm. It carries out the reaction O-phospho-L-serine + 2-oxoglutarate = 3-phosphooxypyruvate + L-glutamate. It catalyses the reaction 4-(phosphooxy)-L-threonine + 2-oxoglutarate = (R)-3-hydroxy-2-oxo-4-phosphooxybutanoate + L-glutamate. The protein operates within amino-acid biosynthesis; L-serine biosynthesis; L-serine from 3-phospho-D-glycerate: step 2/3. It participates in cofactor biosynthesis; pyridoxine 5'-phosphate biosynthesis; pyridoxine 5'-phosphate from D-erythrose 4-phosphate: step 3/5. Its function is as follows. Catalyzes the reversible conversion of 3-phosphohydroxypyruvate to phosphoserine and of 3-hydroxy-2-oxo-4-phosphonooxybutanoate to phosphohydroxythreonine. The sequence is that of Phosphoserine aminotransferase from Shewanella sp. (strain MR-7).